Consider the following 355-residue polypeptide: Guanine nucleotide-binding protein G(i) subunit alpha (355 aa).

A lipid anchor (N-myristoyl glycine) is attached at Gly-2. The S-palmitoyl cysteine moiety is linked to residue Cys-3. In terms of domain architecture, G-alpha spans 33-355; sequence REVKLLLLGA…KNNLKDCGLF (323 aa). Residues 36–49 form a G1 motif region; the sequence is KLLLLGAGESGKST. GTP-binding positions include 41-48, 176-182, 201-205, 270-273, and Ala-327; these read GAGESGKS, LRTRVKT, DVGGQ, and NKKD. Residues Ser-48 and Thr-182 each contribute to the Mg(2+) site. Residues 174 to 182 form a G2 motif region; sequence DVLRTRVKT. The tract at residues 197 to 206 is G3 motif; sequence FKLFDVGGQR. The tract at residues 266-273 is G4 motif; sequence ILFLNKKD. Positions 325 to 330 are G5 motif; sequence TCATDT.

Belongs to the G-alpha family. G(i/o/t/z) subfamily. G proteins are composed of 3 units; alpha, beta and gamma. The alpha chain contains the guanine nucleotide binding site.

Its function is as follows. Guanine nucleotide-binding proteins (G proteins) are involved as modulators or transducers in various transmembrane signaling systems. This is Guanine nucleotide-binding protein G(i) subunit alpha from Homarus americanus (American lobster).